The sequence spans 263 residues: Heat-labile enterotoxin IIB, A chain (263 aa).

Residues 1–20 (MAKVISFFISLFLISFPLYA) form the signal peptide. 26-39 (ADSRTPDEVRRSGG) lines the NAD(+) pocket. Glu-130 is a catalytic residue. A disulfide bridge links Cys-205 with Cys-217.

Belongs to the enterotoxin A family. Heterohexamer of one A chain and of five B chains.

In terms of biological role, the biological activity of the toxin is produced by the A chain, which activates intracellular adenyl cyclase. The sequence is that of Heat-labile enterotoxin IIB, A chain from Escherichia coli.